The chain runs to 434 residues: MKPSKHLIFALFALAISQPTMAAPQPLDRVAVQINDGIVLESEITNMIDTVKANAKAANQSLPSDSALRTQVIERLILTRLQLQMADRIGLHIGDLQLDQAIENIAREQKMTVAQMQQKIASEGISFSQYREQLREEITLGEIQRIQVQRRIQVSPQEITGLVKLIQEQGMKDVEYQIGHILIDVPNNPTSEQLEASSKRANAVLERLKSGEDFRRTAIASSSGPKALEGGIWDYMNINEMPTLFAEVINGAKKGDIIGPIKTGAGFHIIKIMDARGLQTKEIEEVRARHILLKPSPILSEDRAKAMLEQFLKQIRSGEAKFEDLARQYSEDPGSATKGGELGWAEPSIYVPEFAQTLNSLSPDQISEPFRTTHGWHITQLEERRKTDATDQFNTNRAHQLIFRRKFNEELQNWLDEMRADAYIEVFQPESNRG.

Positions 1-22 are cleaved as a signal peptide; the sequence is MKPSKHLIFALFALAISQPTMA. PpiC domains lie at 173–274 and 283–383; these read DVEY…KIMD and IEEV…QLEE.

It is found in the periplasm. The enzyme catalyses [protein]-peptidylproline (omega=180) = [protein]-peptidylproline (omega=0). Chaperone involved in the correct folding and assembly of outer membrane proteins. Recognizes specific patterns of aromatic residues and the orientation of their side chains, which are found more frequently in integral outer membrane proteins. May act in both early periplasmic and late outer membrane-associated steps of protein maturation. The chain is Chaperone SurA from Shewanella oneidensis (strain ATCC 700550 / JCM 31522 / CIP 106686 / LMG 19005 / NCIMB 14063 / MR-1).